The primary structure comprises 113 residues: Large ribosomal subunit protein uL22 (113 aa).

This sequence belongs to the universal ribosomal protein uL22 family. Part of the 50S ribosomal subunit.

This protein binds specifically to 23S rRNA; its binding is stimulated by other ribosomal proteins, e.g. L4, L17, and L20. It is important during the early stages of 50S assembly. It makes multiple contacts with different domains of the 23S rRNA in the assembled 50S subunit and ribosome. Functionally, the globular domain of the protein is located near the polypeptide exit tunnel on the outside of the subunit, while an extended beta-hairpin is found that lines the wall of the exit tunnel in the center of the 70S ribosome. This is Large ribosomal subunit protein uL22 from Magnetococcus marinus (strain ATCC BAA-1437 / JCM 17883 / MC-1).